We begin with the raw amino-acid sequence, 68 residues long: Large ribosomal subunit protein bL31 (68 aa).

Cys-16, Cys-18, Cys-36, and Cys-39 together coordinate Zn(2+).

It belongs to the bacterial ribosomal protein bL31 family. Type A subfamily. In terms of assembly, part of the 50S ribosomal subunit. Requires Zn(2+) as cofactor.

In terms of biological role, binds the 23S rRNA. The sequence is that of Large ribosomal subunit protein bL31 from Sorangium cellulosum (strain So ce56) (Polyangium cellulosum (strain So ce56)).